The chain runs to 224 residues: Ribose-5-phosphate isomerase A (224 aa).

Substrate-binding positions include 32 to 35 (TGST), 85 to 88 (DGAD), and 98 to 101 (KGGG). Catalysis depends on glutamate 107, which acts as the Proton acceptor. Position 125 (lysine 125) interacts with substrate.

It belongs to the ribose 5-phosphate isomerase family. As to quaternary structure, homodimer.

The catalysed reaction is aldehydo-D-ribose 5-phosphate = D-ribulose 5-phosphate. The protein operates within carbohydrate degradation; pentose phosphate pathway; D-ribose 5-phosphate from D-ribulose 5-phosphate (non-oxidative stage): step 1/1. Functionally, catalyzes the reversible conversion of ribose-5-phosphate to ribulose 5-phosphate. This is Ribose-5-phosphate isomerase A from Pseudomonas entomophila (strain L48).